Reading from the N-terminus, the 487-residue chain is Rhoptry apical surface protein 1 (487 aa).

Residues 337–487 (EVAMSGRGGH…EEEQPLLFTQ (151 aa)) are disordered. Composition is skewed to basic and acidic residues over residues 385–399 (DGIR…DRRA) and 454–475 (EKNE…GVEY).

As to quaternary structure, interacts with RASP2.

It localises to the cytoplasmic vesicle. The protein resides in the secretory vesicle. It is found in the rhoptry membrane. This is Rhoptry apical surface protein 1 from Toxoplasma gondii (strain ATCC 50853 / GT1).